A 624-amino-acid chain; its full sequence is Galactan 5-O-arabinofuranosyltransferase (624 aa).

A run of 13 helical transmembrane segments spans residues 5-25 (VLGQMVLAVLMASAVAGVAIA), 43-63 (ALTTVGQFGCLAGLFAAGLLW), 73-93 (LGALAFISAFSVVTLAMPLGA), 127-147 (IGLPPFYPAGWFWLGGRIAAA), 159-179 (WSIVSITIAVALALVLWAAMI), 181-201 (FEYALVATAASTAAMLAYAST), 203-223 (PYAAIITVLMPPVFVLAWAGL), 234-254 (AIVGVGIFLGVAALFYTLLLV), 280-300 (LAVIAVISGAIALLTWAPYLL), 326-346 (FPMFSLTLHGALCMLGTVWLV), 355-375 (AGALAVAVVAVYAWSLLSMLT), 391-411 (LTVLLTTAGAFGFIEATLAIA), and 422-442 (VVAAATAVGAIGAVTFSQDIP).

This sequence belongs to the glycosyltransferase 85 family.

Its subcellular location is the cell membrane. It catalyses the reaction Adds an alpha-D-arabinofuranosyl group from trans,octacis-decaprenylphospho-beta-D-arabinofuranose at the 5-O-position of the eighth, tenth and twelfth galactofuranose unit of the galactofuranan chain of [beta-D-galactofuranosyl-(1-&gt;5)-beta-D-galactofuranosyl-(1-&gt;6)]14-beta-D-galactofuranosyl-(1-&gt;5)-beta-D-galactofuranosyl-(1-&gt;4)-alpha-L-rhamnopyranosyl-(1-&gt;3)-N-acetyl-alpha-D-glucosaminyl-diphospho-trans,octacis-decaprenol.. The protein operates within cell wall biogenesis; cell wall polysaccharide biosynthesis. Involved in the biosynthesis of the arabinogalactan (AG) region of the mycolylarabinogalactan-peptidoglycan (mAGP) complex, an essential component of the mycobacterial cell wall. Catalyzes the addition of the first key arabinofuranosyl (Araf) residue from the sugar donor decaprenyl-phospho-arabinose (DPA) on the C-5 of a 6-linked galactofuranosyl (Galf) of the galactan domain, thus 'priming' the galactan for further elaboration by other arabinofuranosyltransferases. It is not able to add an Araf residue to a terminal Galf. The protein is Galactan 5-O-arabinofuranosyltransferase of Mycolicibacterium smegmatis (strain ATCC 700084 / mc(2)155) (Mycobacterium smegmatis).